The chain runs to 197 residues: Small ribosomal subunit protein uS4B (197 aa).

Residues 88–151 (CRLDNIAYRI…RKNDEFADNF (64 aa)) form the S4 RNA-binding domain.

This sequence belongs to the universal ribosomal protein uS4 family. Part of the 30S ribosomal subunit. Contacts protein S5. The interaction surface between S4 and S5 is involved in control of translational fidelity.

Its function is as follows. One of the primary rRNA binding proteins, it binds directly to 16S rRNA where it nucleates assembly of the body of the 30S subunit. In terms of biological role, with S5 and S12 plays an important role in translational accuracy. This chain is Small ribosomal subunit protein uS4B, found in Clostridium botulinum (strain Langeland / NCTC 10281 / Type F).